The sequence spans 548 residues: Natural resistance-associated macrophage protein 1 (548 aa).

Residues 1–38 are disordered; it reads MSGDTGPPKQGGTRYGSISSPPSPEPQQAPPGGTYLSE. At 1–55 the chain is on the cytoplasmic side; it reads MSGDTGPPKQGGTRYGSISSPPSPEPQQAPPGGTYLSEKIPIPDTESGTFSLRKL. A helical membrane pass occupies residues 56–73; it reads WAFTGPGFLMSIAFLDPG. Over 74–82 the chain is Extracellular; that stretch reads NIESDLQAG. A helical membrane pass occupies residues 83 to 102; that stretch reads AVAGFKLLWVLLWATVLGLL. Topologically, residues 103 to 139 are cytoplasmic; the sequence is CQRLAARLGVVTGKDLGEVCHLYYPKVPRILLWLTIE. Residues 140–160 form a helical membrane-spanning segment; sequence LAIVGSDMQEVIGTAIAFSLL. The Extracellular portion of the chain corresponds to 161 to 164; the sequence is SAGR. The chain crosses the membrane as a helical span at residues 165 to 184; the sequence is IPLWGGVLITIVDAFFFLFL. The Cytoplasmic segment spans residues 185 to 193; sequence DNYGLRKLE. The helical transmembrane segment at 194-214 threads the bilayer; that stretch reads AFFGFLITIMALTFGYEYVVA. The Extracellular segment spans residues 215–237; it reads QPAQGALLQGLFLPSCPGCGQPE. Residues 238–256 form a helical membrane-spanning segment; it reads LLQAVGIIGAIIMPHNIYL. Topologically, residues 257–284 are cytoplasmic; that stretch reads HSSLVKSREVDRSRRADIREANMYFLIE. A helical membrane pass occupies residues 285–304; the sequence is ATIALSVSFLINLFVMAVFG. Residues 305 to 346 are Extracellular-facing; sequence QAFYKQTNQAAFNICANSSLQDYAPIFPRNNLTVAVDIYQGG. N-linked (GlcNAc...) asparagine glycans are attached at residues asparagine 321 and asparagine 335. The helical transmembrane segment at 347–366 threads the bilayer; sequence VILGCLFGPAALYIWAVGLL. The Cytoplasmic portion of the chain corresponds to 367–397; it reads AAGQSSTMTGTYAGQFVMEGFLKLRWSRFAR. A helical membrane pass occupies residues 398–415; it reads VLLTRSCAILPTVLLAVF. The Extracellular portion of the chain corresponds to 416–426; sequence RDLRDLSGLND. Residues 427–447 traverse the membrane as a helical segment; sequence LLNVLQSLLLPFAVLPILTFT. At 448–463 the chain is on the cytoplasmic side; that stretch reads SMPALMREFANGLVSK. The chain crosses the membrane as a helical span at residues 464 to 485; the sequence is VITSSIMVLVCAVNLYFVISYV. Residues 486–493 lie on the Extracellular side of the membrane; sequence PSLPHPAY. A helical membrane pass occupies residues 494–513; it reads FSLVALLAAAYLGLTTYLVW. Over 514 to 548 the chain is Cytoplasmic; sequence TCLITQGATLLAHSSHQRFLYGLPEEDQEKGRTSG.

It belongs to the NRAMP family.

It localises to the late endosome membrane. Its subcellular location is the lysosome membrane. The catalysed reaction is Zn(2+)(in) + H(+)(out) = Zn(2+)(out) + H(+)(in). It carries out the reaction Fe(2+)(in) + H(+)(out) = Fe(2+)(out) + H(+)(in). It catalyses the reaction Mn(2+)(in) + H(+)(out) = Mn(2+)(out) + H(+)(in). Its function is as follows. Macrophage-specific antiporter that fluxes metal ions in either direction against a proton gradient. Localized to late endosomal lysosomal membranes, delivers bivalent cations from the cytosol into these acidic compartments where they may directly affect antimicrobial activity. Involved in iron metabolism and host natural resistance to infection with intracellular parasites. Pathogen resistance involves sequestration of Fe(2+) and Mn(2+), cofactors of both prokaryotic and eukaryotic catalases and superoxide dismutases, not only to protect the macrophage against its own generation of reactive oxygen species, but to deny the cations to the pathogen for synthesis of its protective enzymes. The polypeptide is Natural resistance-associated macrophage protein 1 (SLC11A1) (Bison bison (American bison)).